The sequence spans 343 residues: Heat-inducible transcription repressor HrcA (343 aa).

Belongs to the HrcA family.

Functionally, negative regulator of class I heat shock genes (grpE-dnaK-dnaJ and groELS operons). Prevents heat-shock induction of these operons. The polypeptide is Heat-inducible transcription repressor HrcA (Natranaerobius thermophilus (strain ATCC BAA-1301 / DSM 18059 / JW/NM-WN-LF)).